The sequence spans 273 residues: Rhamnulose-1-phosphate aldolase (273 aa).

Residue Glu-117 is part of the active site. The Zn(2+) site is built by His-140, His-142, and His-211.

This sequence belongs to the aldolase class II family. RhaD subfamily. Zn(2+) serves as cofactor.

It localises to the cytoplasm. The catalysed reaction is L-rhamnulose 1-phosphate = (S)-lactaldehyde + dihydroxyacetone phosphate. The protein operates within carbohydrate degradation; L-rhamnose degradation; glycerone phosphate from L-rhamnose: step 3/3. Functionally, catalyzes the reversible cleavage of L-rhamnulose-1-phosphate to dihydroxyacetone phosphate (DHAP) and L-lactaldehyde. The protein is Rhamnulose-1-phosphate aldolase of Listeria monocytogenes serotype 4b (strain CLIP80459).